The primary structure comprises 119 residues: Beta-2-microglobulin (119 aa).

The N-terminal stretch at 1 to 21 (MGKAAAVVLVTLVALLGLAQA) is a signal peptide. The region spanning 25 to 113 (PKVQVYSRFP…HETLKEPQVY (89 aa)) is the Ig-like C1-type domain. A disulfide bond links Cys-45 and Cys-100.

Belongs to the beta-2-microglobulin family. In terms of assembly, heterodimer of an alpha chain and a beta chain. Beta-2-microglobulin is the beta-chain of major histocompatibility complex class I molecules.

It is found in the secreted. Its function is as follows. Component of the class I major histocompatibility complex (MHC). Involved in the presentation of peptide antigens to the immune system. This chain is Beta-2-microglobulin (B2M), found in Gallus gallus (Chicken).